A 612-amino-acid chain; its full sequence is Probable exonuclease subunit 2 (612 aa).

An ATP-binding site is contributed by 35–42 (GGNGLGKS). Coiled coils occupy residues 163–193 (NQEQ…GQMA) and 288–459 (SRAS…VADL).

The protein to phage T4 protein GP46. As to quaternary structure, could consist of two subunits: D13 and D12.

Functionally, possible exonuclease that may play a role in viral genome replication, DNA recombination, and host DNA degradation. This is Probable exonuclease subunit 2 (D13) from Escherichia phage T5 (Enterobacteria phage T5).